A 207-amino-acid chain; its full sequence is Thiamine-phosphate synthase (207 aa).

4-amino-2-methyl-5-(diphosphooxymethyl)pyrimidine-binding positions include 36–40 (QLRMK) and asparagine 68. Residues aspartate 69 and aspartate 88 each contribute to the Mg(2+) site. Serine 106 is a binding site for 4-amino-2-methyl-5-(diphosphooxymethyl)pyrimidine. 132 to 134 (TNT) is a binding site for 2-[(2R,5Z)-2-carboxy-4-methylthiazol-5(2H)-ylidene]ethyl phosphate. Lysine 135 contributes to the 4-amino-2-methyl-5-(diphosphooxymethyl)pyrimidine binding site. 2-[(2R,5Z)-2-carboxy-4-methylthiazol-5(2H)-ylidene]ethyl phosphate contacts are provided by residues glycine 162 and 182 to 183 (VS).

Belongs to the thiamine-phosphate synthase family. It depends on Mg(2+) as a cofactor.

The enzyme catalyses 2-[(2R,5Z)-2-carboxy-4-methylthiazol-5(2H)-ylidene]ethyl phosphate + 4-amino-2-methyl-5-(diphosphooxymethyl)pyrimidine + 2 H(+) = thiamine phosphate + CO2 + diphosphate. It catalyses the reaction 2-(2-carboxy-4-methylthiazol-5-yl)ethyl phosphate + 4-amino-2-methyl-5-(diphosphooxymethyl)pyrimidine + 2 H(+) = thiamine phosphate + CO2 + diphosphate. It carries out the reaction 4-methyl-5-(2-phosphooxyethyl)-thiazole + 4-amino-2-methyl-5-(diphosphooxymethyl)pyrimidine + H(+) = thiamine phosphate + diphosphate. The protein operates within cofactor biosynthesis; thiamine diphosphate biosynthesis; thiamine phosphate from 4-amino-2-methyl-5-diphosphomethylpyrimidine and 4-methyl-5-(2-phosphoethyl)-thiazole: step 1/1. Its function is as follows. Condenses 4-methyl-5-(beta-hydroxyethyl)thiazole monophosphate (THZ-P) and 2-methyl-4-amino-5-hydroxymethyl pyrimidine pyrophosphate (HMP-PP) to form thiamine monophosphate (TMP). This is Thiamine-phosphate synthase from Methanococcus maripaludis (strain C7 / ATCC BAA-1331).